Consider the following 296-residue polypeptide: Ribonuclease HIII (296 aa).

The RNase H type-2 domain maps to 81 to 296; the sequence is QAMIGTDEVG…TQKAKQLLER (216 aa). A divalent metal cation-binding residues include Asp87, Glu88, and Asp190.

The protein belongs to the RNase HII family. RnhC subfamily. It depends on Mn(2+) as a cofactor. Mg(2+) is required as a cofactor.

Its subcellular location is the cytoplasm. The enzyme catalyses Endonucleolytic cleavage to 5'-phosphomonoester.. Functionally, endonuclease that specifically degrades the RNA of RNA-DNA hybrids. The protein is Ribonuclease HIII of Streptococcus gordonii (strain Challis / ATCC 35105 / BCRC 15272 / CH1 / DL1 / V288).